The primary structure comprises 278 residues: Small ribosomal subunit protein uS2 (278 aa).

Disordered stretches follow at residues 216-235 (EAAAAAKEAEDDTGYTTQWD) and 250-278 (NFAAAPADGNWGATTGGDWAAAGGEEWTN). Positions 256–278 (ADGNWGATTGGDWAAAGGEEWTN) are enriched in low complexity.

The protein belongs to the universal ribosomal protein uS2 family. Component of the small ribosomal subunit. Mature ribosomes consist of a small (40S) and a large (60S) subunit. The 40S subunit contains about 33 different proteins and 1 molecule of RNA (18S). The 60S subunit contains about 49 different proteins and 3 molecules of RNA (25S, 5.8S and 5S). Interacts with ribosomal protein S21.

The protein localises to the cytoplasm. In terms of biological role, required for the assembly and/or stability of the 40S ribosomal subunit. Required for the processing of the 20S rRNA-precursor to mature 18S rRNA in a late step of the maturation of 40S ribosomal subunits. This is Small ribosomal subunit protein uS2 from Monosiga brevicollis (Choanoflagellate).